The primary structure comprises 591 residues: Probable auxin efflux carrier component 3b (591 aa).

The Extracellular segment spans residues 1-6; that stretch reads MISWHE. The helical transmembrane segment at 7–27 threads the bilayer; the sequence is LYMVLSAVVPLYVAMMVAYGS. Residues 28–38 are Cytoplasmic-facing; sequence VRWWGVLTPEQ. The helical transmembrane segment at 39–59 threads the bilayer; sequence CSGINRFVAVIAVPLLSFHFI. V51 serves as a coordination point for (indol-3-yl)acetate. Topologically, residues 60–70 are extracellular; the sequence is SSSDPYAMNLR. A helical transmembrane segment spans residues 71 to 93; that stretch reads FVAADTLQKVLVLAALAAWSRFP. The Cytoplasmic segment spans residues 94-107; it reads ARFVPPAWPPLDCS. Residues 108–128 form a helical membrane-spanning segment; that stretch reads ITLFSVSTLPNTLVMGIPLLV. Positions 118 and 120 each coordinate (indol-3-yl)acetate. Residues 129 to 137 lie on the Extracellular side of the membrane; it reads SMYGPYSGD. Residues 138-158 form a helical membrane-spanning segment; the sequence is LMVQIVVLQSIVWYTLLLFLF. Y151 serves as a coordination point for (indol-3-yl)acetate. At 159 to 450 the chain is on the cytoplasmic side; sequence EFRAARVLIA…LIRNPNTYAS (292 aa). Polar residues-rich tracts occupy residues 243-254 and 283-292; these read SRNATPRGSTFT and SSSRQHTPRP. Disordered stretches follow at residues 243–269, 283–313, 344–374, and 392–420; these read SRNA…SALR, SSSR…APTN, ETRR…GERA, and AGAK…RARG. A compositionally biased stretch (low complexity) spans 395–407; that stretch reads KTEQQTTAVTTTT. The chain crosses the membrane as a helical span at residues 451–471; the sequence is LIGLTWSLIAFRFHITMPIIV. Over 472-474 the chain is Extracellular; sequence AKS. A helical membrane pass occupies residues 475–495; that stretch reads ISILSDAGLGMAMFSLGLFMA. Residues 496-511 are Cytoplasmic-facing; the sequence is TQPKIIACGYSVAAAS. Residues 512–532 form a helical membrane-spanning segment; it reads MGVRFFFGPAIMAAASAAVGI. Residues 533–535 lie on the Extracellular side of the membrane; that stretch reads RGT. The helical transmembrane segment at 536–556 threads the bilayer; that stretch reads LLRIAIVQAALPQGIVPFVFA. Residues I550 and V551 each contribute to the (indol-3-yl)acetate site. Over 557–568 the chain is Cytoplasmic; the sequence is KEYNLHATILCT. Residues 569–589 form a helical membrane-spanning segment; sequence LVIFGMLIALPITLVYYIILG. The Extracellular portion of the chain corresponds to 590–591; it reads LL.

It belongs to the auxin efflux carrier (TC 2.A.69.1) family. As to quaternary structure, homodimer. As to expression, expressed in stem bases and leaves.

Its subcellular location is the membrane. Its function is as follows. May act as a component of the auxin efflux carrier. The sequence is that of Probable auxin efflux carrier component 3b from Oryza sativa subsp. japonica (Rice).